Here is a 352-residue protein sequence, read N- to C-terminus: DNA polymerase IV (352 aa).

Positions 3 to 187 (VLFVDFDYFY…LDIADVPGIG (185 aa)) constitute a UmuC domain. Residues D7 and D105 each contribute to the Mg(2+) site. Residue E106 is part of the active site.

The protein belongs to the DNA polymerase type-Y family. In terms of assembly, monomer. Interacts with the PCNA heterotrimer via PCNA1. The cofactor is Mg(2+).

Its subcellular location is the cytoplasm. It carries out the reaction DNA(n) + a 2'-deoxyribonucleoside 5'-triphosphate = DNA(n+1) + diphosphate. In terms of biological role, poorly processive, error-prone DNA polymerase involved in untargeted mutagenesis. Copies undamaged DNA at stalled replication forks, which arise in vivo from mismatched or misaligned primer ends. These misaligned primers can be extended by PolIV. Exhibits no 3'-5' exonuclease (proofreading) activity. It is involved in translesional synthesis. This chain is DNA polymerase IV (dbh), found in Saccharolobus solfataricus (strain ATCC 35092 / DSM 1617 / JCM 11322 / P2) (Sulfolobus solfataricus).